Consider the following 330-residue polypeptide: MQNFIEQIQKCENLNDLEAIRISVLGKKGILTEGFTKLKELEDEAKKEFAAKLNAQKEIFNEAYLAKFKDLENLALEERMKQDALNFNYFDESITTGALHPVMSTMDKIIEYFIALNFSIEKGPLIEDDFHNFEALNLPKSHPARDMQDTFYFDDKRLLRTQTSPVQIRTMLAQKPPIRMIAPGAVFRRDFDITHTPMFHQVEGLVVEEGQKVSFANLKSVLEDFLRYMFGDVKVRFRPSFFPFTEPSAEVDISCVFCKGKGCRVCKHTGWLEVLGCGIVDPNVYNFVGYENVSGYAFGLGVERFAMLLHQIPDLRSLFEGDLRLLEQFR.

Mg(2+) is bound at residue Glu-246.

This sequence belongs to the class-II aminoacyl-tRNA synthetase family. Phe-tRNA synthetase alpha subunit type 1 subfamily. As to quaternary structure, tetramer of two alpha and two beta subunits. The cofactor is Mg(2+).

It is found in the cytoplasm. The enzyme catalyses tRNA(Phe) + L-phenylalanine + ATP = L-phenylalanyl-tRNA(Phe) + AMP + diphosphate + H(+). The protein is Phenylalanine--tRNA ligase alpha subunit of Campylobacter jejuni subsp. jejuni serotype O:6 (strain 81116 / NCTC 11828).